Consider the following 630-residue polypeptide: MNASSKRKIISQSEISKKIAVMNEEMQGFWANNSWDIRKCPHPSAIELSKNPALRNRWVRFERVKNLWLRTELKYFYFYHLNNGIWNAKTVWIRKGTVINKMLDFLDLKYPSITSITEVPIDKAMTEYRTYLTKQGVRITTTNYKITANQEKTPVKANSYYVTNLKQFIEFIEDFYFDGEEWDKDVWDRRNLPLPDDKVNPTQYEYTINFKGFRNTYFKQLVKRYCKLRLNMDSFSYVSDIAQKLKEFFNFLDIKFKHVQRVHQLTRVEIEAYLSELNMMGIKPSTITGRISILEGLFSTLHRLEWDDVPSKLLIYPEDYPKIPRAKPRFIDEFVLEQLNSHLDKLPEYIATMTMIVQECGMRISELCTLKKGCLLEDKDGYYFLKYYQWKMKKEHIVPISKEVVLLIKVREDKVSEEFPDSEYLFPRKDGSPLKQETFRGELNKLAYEQNIVDKLGEIYRFHAHAFRHSVGTRTINNGVPQHIVQKFLGHESPEMTSRYAHIFDETLKNEFTKFQEKLVTNNGDVLNLDDDSEVDDVELQWFKKNINAQVLPNGYCRLPVIAGGCPHANACLDCTHFCTSKQFLPQHEEQLERTEELLTIAKDKQWQRQIETNSRVKERLEQIIGSLTG.

The 87-residue stretch at 216 to 302 (TYFKQLVKRY…ILEGLFSTLH (87 aa)) folds into the Core-binding (CB) domain. The Tyr recombinase domain occupies 326–513 (AKPRFIDEFV…FDETLKNEFT (188 aa)). Active-site residues include Arg363, Lys391, His465, Arg468, and His491. Residue Tyr500 is the O-(3'-phospho-DNA)-tyrosine intermediate of the active site.

It belongs to the 'phage' integrase family.

This is Transposase B from transposon PsiTn554 (tnpB) from Staphylococcus aureus.